The primary structure comprises 188 residues: Elongation factor P 1 (188 aa).

The protein belongs to the elongation factor P family.

It localises to the cytoplasm. It functions in the pathway protein biosynthesis; polypeptide chain elongation. Functionally, involved in peptide bond synthesis. Stimulates efficient translation and peptide-bond synthesis on native or reconstituted 70S ribosomes in vitro. Probably functions indirectly by altering the affinity of the ribosome for aminoacyl-tRNA, thus increasing their reactivity as acceptors for peptidyl transferase. The sequence is that of Elongation factor P 1 from Mesorhizobium japonicum (strain LMG 29417 / CECT 9101 / MAFF 303099) (Mesorhizobium loti (strain MAFF 303099)).